The sequence spans 127 residues: Phosphoribosyl-AMP cyclohydrolase (127 aa).

D78 serves as a coordination point for Mg(2+). C79 is a Zn(2+) binding site. The Mg(2+) site is built by D80 and D82. 2 residues coordinate Zn(2+): C95 and C102.

Belongs to the PRA-CH family. Homodimer. Mg(2+) serves as cofactor. Requires Zn(2+) as cofactor.

The protein resides in the cytoplasm. It catalyses the reaction 1-(5-phospho-beta-D-ribosyl)-5'-AMP + H2O = 1-(5-phospho-beta-D-ribosyl)-5-[(5-phospho-beta-D-ribosylamino)methylideneamino]imidazole-4-carboxamide. It participates in amino-acid biosynthesis; L-histidine biosynthesis; L-histidine from 5-phospho-alpha-D-ribose 1-diphosphate: step 3/9. Catalyzes the hydrolysis of the adenine ring of phosphoribosyl-AMP. This is Phosphoribosyl-AMP cyclohydrolase from Salinibacter ruber (strain DSM 13855 / M31).